A 363-amino-acid chain; its full sequence is tRNA/tmRNA (uracil-C(5))-methyltransferase (363 aa).

5 residues coordinate S-adenosyl-L-methionine: Gln-187, Tyr-215, Asn-220, Glu-236, and Asp-296. The active-site Nucleophile is Cys-321. Glu-355 (proton acceptor) is an active-site residue.

It belongs to the class I-like SAM-binding methyltransferase superfamily. RNA M5U methyltransferase family. TrmA subfamily.

It catalyses the reaction uridine(54) in tRNA + S-adenosyl-L-methionine = 5-methyluridine(54) in tRNA + S-adenosyl-L-homocysteine + H(+). The catalysed reaction is uridine(341) in tmRNA + S-adenosyl-L-methionine = 5-methyluridine(341) in tmRNA + S-adenosyl-L-homocysteine + H(+). Functionally, dual-specificity methyltransferase that catalyzes the formation of 5-methyluridine at position 54 (m5U54) in all tRNAs, and that of position 341 (m5U341) in tmRNA (transfer-mRNA). In Haemophilus influenzae (strain 86-028NP), this protein is tRNA/tmRNA (uracil-C(5))-methyltransferase.